The following is a 192-amino-acid chain: dTTP/UTP pyrophosphatase (192 aa).

Residue aspartate 75 is the Proton acceptor of the active site.

It belongs to the Maf family. YhdE subfamily. A divalent metal cation serves as cofactor.

The protein localises to the cytoplasm. The catalysed reaction is dTTP + H2O = dTMP + diphosphate + H(+). It carries out the reaction UTP + H2O = UMP + diphosphate + H(+). Nucleoside triphosphate pyrophosphatase that hydrolyzes dTTP and UTP. May have a dual role in cell division arrest and in preventing the incorporation of modified nucleotides into cellular nucleic acids. This Pelodictyon phaeoclathratiforme (strain DSM 5477 / BU-1) protein is dTTP/UTP pyrophosphatase.